A 342-amino-acid polypeptide reads, in one-letter code: tRNA N6-adenosine threonylcarbamoyltransferase (342 aa).

Fe cation-binding residues include H114 and H118. Substrate is bound by residues 136 to 140 (LVSGG), D169, G182, D186, and N275. D301 lines the Fe cation pocket.

This sequence belongs to the KAE1 / TsaD family. It depends on Fe(2+) as a cofactor.

It localises to the cytoplasm. It catalyses the reaction L-threonylcarbamoyladenylate + adenosine(37) in tRNA = N(6)-L-threonylcarbamoyladenosine(37) in tRNA + AMP + H(+). Functionally, required for the formation of a threonylcarbamoyl group on adenosine at position 37 (t(6)A37) in tRNAs that read codons beginning with adenine. Is involved in the transfer of the threonylcarbamoyl moiety of threonylcarbamoyl-AMP (TC-AMP) to the N6 group of A37, together with TsaE and TsaB. TsaD likely plays a direct catalytic role in this reaction. This is tRNA N6-adenosine threonylcarbamoyltransferase from Streptococcus pyogenes serotype M18 (strain MGAS8232).